A 90-amino-acid polypeptide reads, in one-letter code: Molybdopterin synthase sulfur carrier subunit (90 aa).

Gly-90 is subject to 1-thioglycine; alternate. Gly-90 is subject to Glycyl adenylate; alternate.

This sequence belongs to the MoaD family. MOCS2A subfamily. As to quaternary structure, heterotetramer; composed of 2 small (Mocs2A) and 2 large (Mocs2B) subunits. Post-translationally, C-terminal thiocarboxylation occurs in 2 steps, it is first acyl-adenylated (-COAMP) via the hesA/moeB/thiF part of MOCS3, then thiocarboxylated (-COSH) via the rhodanese domain of MOCS3.

It is found in the cytoplasm. Its pathway is cofactor biosynthesis; molybdopterin biosynthesis. Acts as a sulfur carrier required for molybdopterin biosynthesis. Component of the molybdopterin synthase complex that catalyzes the conversion of precursor Z into molybdopterin by mediating the incorporation of 2 sulfur atoms into precursor Z to generate a dithiolene group. In the complex, serves as sulfur donor by being thiocarboxylated (-COSH) at its C-terminus by MOCS3. After interaction with Mocs2B, the sulfur is then transferred to precursor Z to form molybdopterin. The chain is Molybdopterin synthase sulfur carrier subunit from Drosophila yakuba (Fruit fly).